Here is an 878-residue protein sequence, read N- to C-terminus: MNSKEIRKAWLDFFESKNHFIVPPKSLIPVNDNSLLWINSGVATLKDYFSGKKNPPSKRMANSQKSIRTNDIENVGITARHHTFFEMLGNFSIGGYFKKEAIEFATEFVLDVLKLDRSRLYFTYFHDDLETKNLWISQGFKEEQLIPGDRKTNFWEVGKGPCGPNTEIFYDRGEKYDQRGIELLKNDIENDRYIEIWNIVFSTYNSDGEGNYTELNQKNIDTGAGLERIVSILQDAPTNFDTDLFLPIIHEIEKYTSYRYKIENYFIKDKAQKEINSYFKIIADHMRTVVNAIADGEKPSNLSRGYILRRLIRRSYYKAIQLKITKSPFLYKLVDVIKASLPFEYDSKKVAEVIKEEEVLFSQTISKGKEILEKFISENSSKDLFPGDLAYKLHETYGFPFELTEEILLQKDIKINKEEFNLAKEKHIEASRNQKETGMDKVINSLALIKAKEDEFIGYEHTNSVSKILHLLNEENELSENDGTSYLILDKTPFYATSGGQKHDRGYIEQNGVKLEILNVFKDKFGNHVHKVVGKLSKNYPVTCQVDLKIRRGLERNHSGTHLMFCALRNVFGNQIKQLGSDNNEDRLTFDAPFDSKPTNEEILKVENLVKSYIQKEVDRQYLIMGIDQAKEINAIMTLEEAEYMDSSKLRIVNFNGITADLCGGTHLENTKLLEDFKITSVEKKAAGVYRIRAISSKETIEKYLENQKQELMQELLVLVKKLKDMQFDFKVSLDESLELSSQIQEIKNLTNLASEAIKNKIKENSKKISIDLNEIELENINGNYLYLNDEISKEEIKNLSGVIREKFPNALVILISKGEAQSAISFASKKYNSINVLKELANHFELRGGGNAILAMGSIKDYSQLKTFLKEKYKWEN.

Zn(2+) is bound by residues His558, His562, Cys663, and His667.

This sequence belongs to the class-II aminoacyl-tRNA synthetase family. The cofactor is Zn(2+).

It is found in the cytoplasm. The catalysed reaction is tRNA(Ala) + L-alanine + ATP = L-alanyl-tRNA(Ala) + AMP + diphosphate. Its function is as follows. Catalyzes the attachment of alanine to tRNA(Ala) in a two-step reaction: alanine is first activated by ATP to form Ala-AMP and then transferred to the acceptor end of tRNA(Ala). Also edits incorrectly charged Ser-tRNA(Ala) and Gly-tRNA(Ala) via its editing domain. The chain is Alanine--tRNA ligase from Mycoplasmopsis synoviae (strain 53) (Mycoplasma synoviae).